The primary structure comprises 148 residues: Coactosin (148 aa).

Residues 1-134 (MSGFDLSEVA…VEDEIAAKIK (134 aa)) form the ADF-H domain. The F-loop; important for stable binding to G-actin and F-actin signature appears at 71 to 76 (DEESKR). The residue at position 147 (S147) is a Phosphoserine.

Belongs to the actin-binding proteins ADF family. Coactosin subfamily. Interacts with 14-3-3 protein 3. Post-translationally, phosphorylation at Ser-147 appears not to affect its binding to actin; however, it may regulate phagocytosis and motility.

Its subcellular location is the cytoplasm. The protein resides in the cell projection. The protein localises to the phagocytic cup. It localises to the pseudopodium. It is found in the cell membrane. Its subcellular location is the cytoskeleton. Functionally, actin-binding protein which is involved in F-actin stabilization. May play a role during phagocytosis and pseudopod formation by contributing to the maintenance of F-actin. In Entamoeba histolytica (strain ATCC 30459 / HM-1:IMSS / ABRM), this protein is Coactosin.